A 127-amino-acid polypeptide reads, in one-letter code: Large ribosomal subunit protein bL12 (127 aa).

Belongs to the bacterial ribosomal protein bL12 family. As to quaternary structure, homodimer. Part of the ribosomal stalk of the 50S ribosomal subunit. Forms a multimeric L10(L12)X complex, where L10 forms an elongated spine to which 2 to 4 L12 dimers bind in a sequential fashion. Binds GTP-bound translation factors.

Functionally, forms part of the ribosomal stalk which helps the ribosome interact with GTP-bound translation factors. Is thus essential for accurate translation. The sequence is that of Large ribosomal subunit protein bL12 from Carboxydothermus hydrogenoformans (strain ATCC BAA-161 / DSM 6008 / Z-2901).